Consider the following 181-residue polypeptide: TATA-box-binding protein (181 aa).

Repeat copies occupy residues Ile8–Met84 and Ile99–Leu175.

It belongs to the TBP family.

Functionally, general factor that plays a role in the activation of archaeal genes transcribed by RNA polymerase. Binds specifically to the TATA box promoter element which lies close to the position of transcription initiation. The polypeptide is TATA-box-binding protein (Methanobrevibacter smithii (strain ATCC 35061 / DSM 861 / OCM 144 / PS)).